The primary structure comprises 465 residues: D-arabinitol 4-dehydrogenase (465 aa).

Belongs to the mannitol dehydrogenase family.

It catalyses the reaction D-arabinitol + NAD(+) = D-xylulose + NADH + H(+). Its pathway is carbohydrate metabolism; D-arabinitol metabolism. The protein is D-arabinitol 4-dehydrogenase (dalD) of Ralstonia nicotianae (strain ATCC BAA-1114 / GMI1000) (Ralstonia solanacearum).